Here is a 403-residue protein sequence, read N- to C-terminus: Na(+)-translocating NADH-quinone reductase subunit B (403 aa).

9 consecutive transmembrane segments (helical) span residues 56–76 (MMII…YNVG), 121–141 (AYFL…EVLF), 164–184 (LPPS…VVLG), 225–245 (GFAG…NILG), 260–280 (GSMG…LLLT), 287–307 (IVAG…AIGS), 312–332 (MFAM…GMIF), 348–368 (WLFG…NPAF), and 371–391 (GMML…HFVV). T230 carries the FMN phosphoryl threonine modification.

Belongs to the NqrB/RnfD family. As to quaternary structure, composed of six subunits; NqrA, NqrB, NqrC, NqrD, NqrE and NqrF. It depends on FMN as a cofactor.

The protein localises to the cell inner membrane. It carries out the reaction a ubiquinone + n Na(+)(in) + NADH + H(+) = a ubiquinol + n Na(+)(out) + NAD(+). Its function is as follows. NQR complex catalyzes the reduction of ubiquinone-1 to ubiquinol by two successive reactions, coupled with the transport of Na(+) ions from the cytoplasm to the periplasm. NqrA to NqrE are probably involved in the second step, the conversion of ubisemiquinone to ubiquinol. The protein is Na(+)-translocating NADH-quinone reductase subunit B of Pseudomonas aeruginosa (strain LESB58).